The primary structure comprises 346 residues: MFSGKENVSFGVLCLLAGCISTSSCLIHLQAKNIGVLLMMFWCFTGLVNKGINALAFNNSLRLAWTLGCDLSAIIERTWQFGLCCSALCVLQRLEGIASLRQAHSTVWDRKRRLLIDFGVGLGLPALQIPMFFIVQPYRLNVIENIGCSAPLYASVPALFIYHLWRLLVSLVCAVYAVLVLRWFMLRRRQFTAALSSQHSGLSQKKYFRLFALAICERVLVSAGQFYVIIQSLQIGGLLPYTSWAEVHTNFNRILFVPVDTIAHSSLLSLSILRWFSLTPAMALFVFFGLTEEAQSVYKARWKALINLCSSKGKKQTDGRESLDLEAFESHGSKFSVLVQRDTVIC.

Helical transmembrane passes span 8 to 28 (VSFG…CLIH), 34 to 54 (IGVL…GINA), 71 to 94 (LSAI…LQRL), 115 to 135 (LIDF…FFIV), 160 to 180 (FIYH…AVLV), 219 to 239 (VLVS…GGLL), and 270 to 290 (LSIL…FFGL).

This sequence belongs to the G-protein coupled receptor 4 family.

Its subcellular location is the membrane. Functionally, receptor for the A1 pheromone, a prenylated mating factor. The protein is Pheromone receptor 2 (PRA2) of Mycosarcoma maydis (Corn smut fungus).